Consider the following 152-residue polypeptide: Ribosome maturation factor RimP (152 aa).

This sequence belongs to the RimP family.

Its subcellular location is the cytoplasm. Required for maturation of 30S ribosomal subunits. The chain is Ribosome maturation factor RimP from Burkholderia lata (strain ATCC 17760 / DSM 23089 / LMG 22485 / NCIMB 9086 / R18194 / 383).